The primary structure comprises 76 residues: Sec-independent protein translocase protein TatA (76 aa).

A helical membrane pass occupies residues Met-1–Gly-21. Residues Arg-44–Ser-76 are disordered. Polar residues predominate over residues Gln-55–Ala-65.

Belongs to the TatA/E family. The Tat system comprises two distinct complexes: a TatABC complex, containing multiple copies of TatA, TatB and TatC subunits, and a separate TatA complex, containing only TatA subunits. Substrates initially bind to the TatABC complex, which probably triggers association of the separate TatA complex to form the active translocon.

It localises to the cell inner membrane. Its function is as follows. Part of the twin-arginine translocation (Tat) system that transports large folded proteins containing a characteristic twin-arginine motif in their signal peptide across membranes. TatA could form the protein-conducting channel of the Tat system. This Methylibium petroleiphilum (strain ATCC BAA-1232 / LMG 22953 / PM1) protein is Sec-independent protein translocase protein TatA.